We begin with the raw amino-acid sequence, 1456 residues long: Alpha-2-macroglobulin-like protein 1 (1456 aa).

Residues 1–19 form the signal peptide; the sequence is MVPTILLSALLLHFTDVVA. Residues N48, N172, and N868 are each glycosylated (N-linked (GlcNAc...) asparagine).

Belongs to the protease inhibitor I39 (alpha-2-macroglobulin) family. As to quaternary structure, homotetramer; consists of two dimer pairs that are disulfide-linked. Part of a complex composed of complement component C3, CLCA1/CLCA3, A2ML1/OH and ALB/serum albumin.

Its subcellular location is the secreted. Functionally, inhibits protease gelatinolytic complex activity against type 1 collagen. The protein is Alpha-2-macroglobulin-like protein 1 of Mus musculus (Mouse).